Consider the following 218-residue polypeptide: MEPGFWHEKWQQQLIGFHQQDINPFLVKYWHTLALPAGAQVFVPLCGKSLDMCFLAEQGHQVIGCELNELAVQQFFEDNQLPMQQSALGEHQHYHTEQVSLYQGDIFTLPASITGKVSGFYDRAALIAWPESMRAQYAKQLAQLLPQGSVGLLVTLDYPQEALSGPPFAVSPTWVETHLSDDFDIQLLDCQDVLADNPRFVKKEVPWLNEAAYLLRRR.

S-adenosyl-L-methionine contacts are provided by tryptophan 10, leucine 45, glutamate 66, and arginine 123.

This sequence belongs to the class I-like SAM-binding methyltransferase superfamily. TPMT family.

The protein resides in the cytoplasm. It catalyses the reaction S-adenosyl-L-methionine + a thiopurine = S-adenosyl-L-homocysteine + a thiopurine S-methylether.. This Shewanella sp. (strain ANA-3) protein is Thiopurine S-methyltransferase.